A 220-amino-acid polypeptide reads, in one-letter code: MPFRDLILFNLSKFLLTEDEESLEIVSSLCRGFEISYDDLISYFPDRKYHKYISKVFEHVDLSEELSMEFHDTTLRDLVYLRLYKYSKYIRPCYKLGDNLKGIVVIKDRNIYIREANDDLIEYLLKEYTPQIYTYSNERVPIAGSKLILCGFSQVTFMAYTTSHITTNKKVDVLVSKKCIDELVDPINYQILQNLFDKGSGTINKILRKIFYSVTGGQTP.

Belongs to the orthopoxvirus OPG087 family. In terms of assembly, interacts with H5 and A18. Might be part of a transcription complex composed at least of OPG087, OPG145, and OPG110.

Functionally, involved in postreplicative transcription elongation on intermediate and late genes. This is Late transcription elongation factor OPG087 (OPG087) from Cynomys gunnisoni (Gunnison's prairie dog).